A 131-amino-acid chain; its full sequence is Phosphoribosyl-AMP cyclohydrolase (131 aa).

Aspartate 89 is a binding site for Mg(2+). Position 90 (cysteine 90) interacts with Zn(2+). Residues aspartate 91 and aspartate 93 each coordinate Mg(2+). Residues cysteine 106 and cysteine 113 each contribute to the Zn(2+) site.

Belongs to the PRA-CH family. In terms of assembly, homodimer. Mg(2+) serves as cofactor. It depends on Zn(2+) as a cofactor.

Its subcellular location is the cytoplasm. The enzyme catalyses 1-(5-phospho-beta-D-ribosyl)-5'-AMP + H2O = 1-(5-phospho-beta-D-ribosyl)-5-[(5-phospho-beta-D-ribosylamino)methylideneamino]imidazole-4-carboxamide. Its pathway is amino-acid biosynthesis; L-histidine biosynthesis; L-histidine from 5-phospho-alpha-D-ribose 1-diphosphate: step 3/9. Catalyzes the hydrolysis of the adenine ring of phosphoribosyl-AMP. This is Phosphoribosyl-AMP cyclohydrolase from Pyrobaculum aerophilum (strain ATCC 51768 / DSM 7523 / JCM 9630 / CIP 104966 / NBRC 100827 / IM2).